The chain runs to 532 residues: Probable rhamnogalacturonase B (532 aa).

Residues 1–21 (MRINTLSLFSLVSLVPTLALA) form the signal peptide. An intrachain disulfide couples Cys42 to Cys68. Asp219 acts as the Proton donor in catalysis. Residues Cys221 and Cys238 are joined by a disulfide bond. An N-linked (GlcNAc...) asparagine glycan is attached at Asn239. His294 is an active-site residue. Asn321 carries an N-linked (GlcNAc...) asparagine glycan. Cystine bridges form between Cys344/Cys350 and Cys374/Cys383. Low complexity-rich tracts occupy residues 466-475 (TVAAATSTPA) and 490-499 (QPSQQSPGQS). The disordered stretch occupies residues 466 to 532 (TVAAATSTPA…HRHHQRHGHH (67 aa)). A compositionally biased stretch (basic residues) spans 521–532 (AGHRHHQRHGHH).

This sequence belongs to the glycosyl hydrolase 28 family.

It is found in the secreted. It catalyses the reaction Endohydrolysis of alpha-D-GalA-(1-&gt;2)-alpha-L-Rha glycosidic bond in the rhamnogalacturonan I backbone with initial inversion of anomeric configuration releasing oligosaccharides with beta-D-GalA at the reducing end.. In terms of biological role, pectinolytic enzymes consist of four classes of enzymes: pectine lyase, polygalacturonase, pectin methylesterase and rhamnogalacturonase. Hydrolyzes alpha-D-galacturonopyranosyl-(1,2)-alpha-L-rhamnopyranosyl linkages in the backbone of the hairy regions of pectins. The protein is Probable rhamnogalacturonase B (rhgB) of Aspergillus oryzae (strain ATCC 42149 / RIB 40) (Yellow koji mold).